Reading from the N-terminus, the 235-residue chain is Pyridoxine 5'-phosphate synthase (235 aa).

Asparagine 7 provides a ligand contact to 3-amino-2-oxopropyl phosphate. 9-10 (DH) is a binding site for 1-deoxy-D-xylulose 5-phosphate. Arginine 18 provides a ligand contact to 3-amino-2-oxopropyl phosphate. Residue histidine 43 is the Proton acceptor of the active site. Residues arginine 45 and histidine 50 each contribute to the 1-deoxy-D-xylulose 5-phosphate site. Glutamate 70 acts as the Proton acceptor in catalysis. A 1-deoxy-D-xylulose 5-phosphate-binding site is contributed by threonine 100. The active-site Proton donor is the histidine 187. Residues glycine 188 and 209-210 (GH) contribute to the 3-amino-2-oxopropyl phosphate site.

The protein belongs to the PNP synthase family. In terms of assembly, homooctamer; tetramer of dimers.

The protein resides in the cytoplasm. It catalyses the reaction 3-amino-2-oxopropyl phosphate + 1-deoxy-D-xylulose 5-phosphate = pyridoxine 5'-phosphate + phosphate + 2 H2O + H(+). It participates in cofactor biosynthesis; pyridoxine 5'-phosphate biosynthesis; pyridoxine 5'-phosphate from D-erythrose 4-phosphate: step 5/5. In terms of biological role, catalyzes the complicated ring closure reaction between the two acyclic compounds 1-deoxy-D-xylulose-5-phosphate (DXP) and 3-amino-2-oxopropyl phosphate (1-amino-acetone-3-phosphate or AAP) to form pyridoxine 5'-phosphate (PNP) and inorganic phosphate. The polypeptide is Pyridoxine 5'-phosphate synthase (Desulfatibacillum aliphaticivorans).